Here is a 462-residue protein sequence, read N- to C-terminus: Phospho-2-dehydro-3-deoxyheptonate aldolase AroG (462 aa).

A Mn(2+)-binding site is contributed by Cys-87. Phosphoenolpyruvate-binding positions include Arg-126, Glu-283 to Arg-284, Lys-306, and Arg-337. Mn(2+)-binding residues include His-369, Glu-411, and Asp-441.

Homodimer. Interacts with Rv0948c. Mn(2+) is required as a cofactor. The cofactor is Co(2+). Cd(2+) serves as cofactor.

The catalysed reaction is D-erythrose 4-phosphate + phosphoenolpyruvate + H2O = 7-phospho-2-dehydro-3-deoxy-D-arabino-heptonate + phosphate. Its pathway is metabolic intermediate biosynthesis; chorismate biosynthesis; chorismate from D-erythrose 4-phosphate and phosphoenolpyruvate: step 1/7. Feedback inhibited by tryptophan, tyrosine, phenylalanine and chorismate. Functionally, catalyzes an aldol-like condensation reaction between phosphoenolpyruvate (PEP) and D-erythrose 4-phosphate (E4P) to generate 3-deoxy-D-arabino-heptulosonate 7-phosphate (DAH7P) and inorganic phosphate. In Mycobacterium tuberculosis (strain ATCC 25618 / H37Rv), this protein is Phospho-2-dehydro-3-deoxyheptonate aldolase AroG (aroG).